Reading from the N-terminus, the 456-residue chain is Argininosuccinate lyase (456 aa).

Belongs to the lyase 1 family. Argininosuccinate lyase subfamily.

The protein localises to the cytoplasm. The enzyme catalyses 2-(N(omega)-L-arginino)succinate = fumarate + L-arginine. It participates in amino-acid biosynthesis; L-arginine biosynthesis; L-arginine from L-ornithine and carbamoyl phosphate: step 3/3. The chain is Argininosuccinate lyase from Listeria monocytogenes serovar 1/2a (strain ATCC BAA-679 / EGD-e).